A 429-amino-acid polypeptide reads, in one-letter code: Phosphoglucosamine mutase (429 aa).

Residue S96 is the Phosphoserine intermediate of the active site. Mg(2+)-binding residues include S96, D230, D232, and D234. The residue at position 96 (S96) is a Phosphoserine.

Belongs to the phosphohexose mutase family. Requires Mg(2+) as cofactor. Activated by phosphorylation.

The catalysed reaction is alpha-D-glucosamine 1-phosphate = D-glucosamine 6-phosphate. Catalyzes the conversion of glucosamine-6-phosphate to glucosamine-1-phosphate. The polypeptide is Phosphoglucosamine mutase (Thermotoga maritima (strain ATCC 43589 / DSM 3109 / JCM 10099 / NBRC 100826 / MSB8)).